Here is a 158-residue protein sequence, read N- to C-terminus: Protein-export protein SecB (158 aa).

It belongs to the SecB family. Homotetramer, a dimer of dimers. One homotetramer interacts with 1 SecA dimer.

The protein resides in the cytoplasm. Functionally, one of the proteins required for the normal export of preproteins out of the cell cytoplasm. It is a molecular chaperone that binds to a subset of precursor proteins, maintaining them in a translocation-competent state. It also specifically binds to its receptor SecA. The polypeptide is Protein-export protein SecB (Bartonella quintana (strain Toulouse) (Rochalimaea quintana)).